Here is a 154-residue protein sequence, read N- to C-terminus: Large ribosomal subunit protein uL15 (154 aa).

A compositionally biased stretch (basic and acidic residues) spans 1 to 13 (MKLNELRDHEGAT). The tract at residues 1 to 44 (MKLNELRDHEGATKNRKRIGRGIGSGTGKTGGCGVKGQKSRSGV) is disordered. A compositionally biased stretch (gly residues) spans 21 to 35 (RGIGSGTGKTGGCGV).

The protein belongs to the universal ribosomal protein uL15 family. As to quaternary structure, part of the 50S ribosomal subunit.

In terms of biological role, binds to the 23S rRNA. The sequence is that of Large ribosomal subunit protein uL15 from Bartonella bacilliformis (strain ATCC 35685 / KC583 / Herrer 020/F12,63).